The chain runs to 657 residues: Translation factor GUF1, mitochondrial (657 aa).

The transit peptide at 1–21 directs the protein to the mitochondrion; it reads MLKTLGLRSLCPSLGGRGFRR. The tr-type G domain maps to 56–240; the sequence is ENYRNFSIVA…TIVDRIPPPT (185 aa). GTP contacts are provided by residues 65–72, 132–136, and 186–189; these read AHVDHGKS, DTPGH, and NKID.

It belongs to the TRAFAC class translation factor GTPase superfamily. Classic translation factor GTPase family. LepA subfamily.

The protein resides in the mitochondrion inner membrane. The catalysed reaction is GTP + H2O = GDP + phosphate + H(+). Functionally, promotes mitochondrial protein synthesis. May act as a fidelity factor of the translation reaction, by catalyzing a one-codon backward translocation of tRNAs on improperly translocated ribosomes. Binds to mitochondrial ribosomes in a GTP-dependent manner. The sequence is that of Translation factor GUF1, mitochondrial from Candida glabrata (strain ATCC 2001 / BCRC 20586 / JCM 3761 / NBRC 0622 / NRRL Y-65 / CBS 138) (Yeast).